Consider the following 1576-residue polypeptide: Protein Shroom (1576 aa).

Disordered stretches follow at residues M1–N31, S46–G100, Y112–S142, R187–E244, I267–T434, V589–S609, and P621–P660. Residues G10–S21 are compositionally biased toward polar residues. Composition is skewed to low complexity over residues S46 to V69, H76 to L91, and S128 to S142. A compositionally biased stretch (basic residues) spans S189–A211. Low complexity-rich tracts occupy residues H212 to E244 and I267 to V283. The segment covering D305–M317 has biased composition (polar residues). A compositionally biased stretch (low complexity) spans Q376–L388. The span at M399–Q415 shows a compositional bias: polar residues. S404 is modified (phosphoserine). The tract at residues A445–N920 is F-actin binding region required for planar polarity and cortical localization. Over residues T633 to C643 the composition is skewed to polar residues. Phosphoserine is present on residues S667 and S668. 7 disordered regions span residues I699–T728, A743–A823, V849–T876, N910–P939, G1036–Y1055, P1091–D1116, and S1210–D1244. The segment covering Q748–Q759 has biased composition (basic residues). The span at P798–P816 shows a compositional bias: pro residues. 2 stretches are compositionally biased toward polar residues: residues N910 to A923 and K1042 to Y1055. 2 stretches are compositionally biased toward pro residues: residues T1094 to L1108 and M1217 to L1229. Residues E1230–E1239 are compositionally biased toward acidic residues. The stretch at E1232–T1296 forms a coiled coil. In terms of domain architecture, ASD2 spans R1305–V1572.

It belongs to the shroom family. As to quaternary structure, monomer or homodimer. Interacts with Rok. Binds (via N-terminus) to F-actin.

The protein localises to the cell junction. It is found in the adherens junction. It localises to the cytoplasm. Its subcellular location is the cytoskeleton. The protein resides in the apical cell membrane. Its function is as follows. Binds to Rho-kinase Rok and targets it to the apical cell cortex where it mediates apical constriction. During embryogenic axis elongation, required for the localization to adherens junctions and the establishment of planar polarization of both Rho-kinase Rok and myosin regulatory light chain sqh. May be involved in the assembly of microtubule arrays during cell elongation. This Drosophila melanogaster (Fruit fly) protein is Protein Shroom.